A 460-amino-acid polypeptide reads, in one-letter code: Cysteine--tRNA ligase (460 aa).

Residue cysteine 29 coordinates Zn(2+). Positions 31-41 (MTVYDYMHIGH) match the 'HIGH' region motif. Residues cysteine 210, histidine 235, and glutamate 239 each coordinate Zn(2+). Residues 267–271 (KMSKS) carry the 'KMSKS' region motif. Lysine 270 contacts ATP.

It belongs to the class-I aminoacyl-tRNA synthetase family. As to quaternary structure, monomer. Zn(2+) serves as cofactor.

It localises to the cytoplasm. The catalysed reaction is tRNA(Cys) + L-cysteine + ATP = L-cysteinyl-tRNA(Cys) + AMP + diphosphate. The chain is Cysteine--tRNA ligase from Coxiella burnetii (strain RSA 493 / Nine Mile phase I).